Reading from the N-terminus, the 89-residue chain is uncharacterized protein (89 aa).

The protein to M.jannaschii MJ1436.

This is an uncharacterized protein from Methanothermobacter thermautotrophicus (strain ATCC 29096 / DSM 1053 / JCM 10044 / NBRC 100330 / Delta H) (Methanobacterium thermoautotrophicum).